The sequence spans 460 residues: NADH-ubiquinone oxidoreductase chain 4 (460 aa).

A run of 13 helical transmembrane segments spans residues 20-42, 61-81, 94-113, 114-134, 148-168, 195-215, 225-245, 258-278, 285-304, 308-330, 351-371, 380-400, and 436-456; these read SKWL…LTWL, PLST…ILAS, RMYI…AFGA, TKII…LIII, TYFL…LLLL, IWWA…GMHL, PVAG…YGMM, LAYP…LVCL, SLIA…GILI, WGFT…LFCL, MVLP…LALP, LMII…TGMG, and LLMT…ELMW.

Belongs to the complex I subunit 4 family. Core subunit of respiratory chain NADH dehydrogenase (Complex I) which is composed of 45 different subunits.

It localises to the mitochondrion inner membrane. The enzyme catalyses a ubiquinone + NADH + 5 H(+)(in) = a ubiquinol + NAD(+) + 4 H(+)(out). Core subunit of the mitochondrial membrane respiratory chain NADH dehydrogenase (Complex I) which catalyzes electron transfer from NADH through the respiratory chain, using ubiquinone as an electron acceptor. Essential for the catalytic activity and assembly of complex I. The protein is NADH-ubiquinone oxidoreductase chain 4 (mt-nd4) of Danio rerio (Zebrafish).